A 447-amino-acid chain; its full sequence is Phosphoglucosamine mutase (447 aa).

The Phosphoserine intermediate role is filled by S103. Mg(2+) contacts are provided by S103, D242, D244, and D246. The residue at position 103 (S103) is a Phosphoserine.

It belongs to the phosphohexose mutase family. The cofactor is Mg(2+). Activated by phosphorylation.

It catalyses the reaction alpha-D-glucosamine 1-phosphate = D-glucosamine 6-phosphate. In terms of biological role, catalyzes the conversion of glucosamine-6-phosphate to glucosamine-1-phosphate. This chain is Phosphoglucosamine mutase, found in Cereibacter sphaeroides (strain ATCC 17025 / ATH 2.4.3) (Rhodobacter sphaeroides).